Reading from the N-terminus, the 1116-residue chain is uncharacterized protein (1116 aa).

The helical transmembrane segment at 3-20 threads the bilayer; it reads FFLTFLLFLFTLFSLFVY.

The protein resides in the membrane. This is an uncharacterized protein from Aquifex aeolicus (strain VF5).